The following is a 376-amino-acid chain: Succinyl-diaminopimelate desuccinylase (376 aa).

Zn(2+) is bound at residue histidine 66. Aspartate 68 is an active-site residue. Aspartate 99 is a binding site for Zn(2+). Glutamate 133 acts as the Proton acceptor in catalysis. Positions 134, 162, and 348 each coordinate Zn(2+).

The protein belongs to the peptidase M20A family. DapE subfamily. As to quaternary structure, homodimer. The cofactor is Zn(2+). Co(2+) serves as cofactor.

It catalyses the reaction N-succinyl-(2S,6S)-2,6-diaminopimelate + H2O = (2S,6S)-2,6-diaminopimelate + succinate. The protein operates within amino-acid biosynthesis; L-lysine biosynthesis via DAP pathway; LL-2,6-diaminopimelate from (S)-tetrahydrodipicolinate (succinylase route): step 3/3. Its function is as follows. Catalyzes the hydrolysis of N-succinyl-L,L-diaminopimelic acid (SDAP), forming succinate and LL-2,6-diaminopimelate (DAP), an intermediate involved in the bacterial biosynthesis of lysine and meso-diaminopimelic acid, an essential component of bacterial cell walls. The chain is Succinyl-diaminopimelate desuccinylase from Xanthomonas oryzae pv. oryzae (strain MAFF 311018).